Reading from the N-terminus, the 198-residue chain is Small ribosomal subunit protein uS4 (198 aa).

An S4 RNA-binding domain is found at 91 to 154 (SRLDNVVYRL…KNLNIVQEAL (64 aa)).

The protein belongs to the universal ribosomal protein uS4 family. As to quaternary structure, part of the 30S ribosomal subunit. Contacts protein S5. The interaction surface between S4 and S5 is involved in control of translational fidelity.

Functionally, one of the primary rRNA binding proteins, it binds directly to 16S rRNA where it nucleates assembly of the body of the 30S subunit. Its function is as follows. With S5 and S12 plays an important role in translational accuracy. The protein is Small ribosomal subunit protein uS4 of Aster yellows witches'-broom phytoplasma (strain AYWB).